Consider the following 298-residue polypeptide: GTP cyclohydrolase FolE2 (298 aa).

It belongs to the GTP cyclohydrolase IV family.

The catalysed reaction is GTP + H2O = 7,8-dihydroneopterin 3'-triphosphate + formate + H(+). The protein operates within cofactor biosynthesis; 7,8-dihydroneopterin triphosphate biosynthesis; 7,8-dihydroneopterin triphosphate from GTP: step 1/1. Functionally, converts GTP to 7,8-dihydroneopterin triphosphate. This chain is GTP cyclohydrolase FolE2, found in Neisseria meningitidis serogroup B (strain ATCC BAA-335 / MC58).